Reading from the N-terminus, the 264-residue chain is Thymidylate synthase (264 aa).

R21 contributes to the dUMP binding site. H51 contacts (6R)-5,10-methylene-5,6,7,8-tetrahydrofolate. Position 126–127 (126–127) interacts with dUMP; sequence RR. Residue C146 is the Nucleophile of the active site. Residues 166 to 169, N177, and 207 to 209 each bind dUMP; these read RSCD and HLY. A (6R)-5,10-methylene-5,6,7,8-tetrahydrofolate-binding site is contributed by D169. A263 contacts (6R)-5,10-methylene-5,6,7,8-tetrahydrofolate.

It belongs to the thymidylate synthase family. Bacterial-type ThyA subfamily. As to quaternary structure, homodimer.

The protein resides in the cytoplasm. The enzyme catalyses dUMP + (6R)-5,10-methylene-5,6,7,8-tetrahydrofolate = 7,8-dihydrofolate + dTMP. Its pathway is pyrimidine metabolism; dTTP biosynthesis. Its function is as follows. Catalyzes the reductive methylation of 2'-deoxyuridine-5'-monophosphate (dUMP) to 2'-deoxythymidine-5'-monophosphate (dTMP) while utilizing 5,10-methylenetetrahydrofolate (mTHF) as the methyl donor and reductant in the reaction, yielding dihydrofolate (DHF) as a by-product. This enzymatic reaction provides an intracellular de novo source of dTMP, an essential precursor for DNA biosynthesis. The chain is Thymidylate synthase from Shewanella baltica (strain OS223).